Consider the following 275-residue polypeptide: Large ribosomal subunit protein uL2 (275 aa).

Residues 223-275 (VAMNPIDHPHGGGEGRTSGGRHPVSPWGVPTKGYKTRSNKRTDKYIVRRRNKK) are disordered.

Belongs to the universal ribosomal protein uL2 family. As to quaternary structure, part of the 50S ribosomal subunit. Forms a bridge to the 30S subunit in the 70S ribosome.

Its function is as follows. One of the primary rRNA binding proteins. Required for association of the 30S and 50S subunits to form the 70S ribosome, for tRNA binding and peptide bond formation. It has been suggested to have peptidyltransferase activity; this is somewhat controversial. Makes several contacts with the 16S rRNA in the 70S ribosome. The polypeptide is Large ribosomal subunit protein uL2 (Shewanella woodyi (strain ATCC 51908 / MS32)).